A 178-amino-acid chain; its full sequence is tRNA (cytidine(56)-2'-O)-methyltransferase (178 aa).

Residues Leu-84, 112-116, and 130-137 contribute to the S-adenosyl-L-methionine site; these read GAEKV and VGNQPHSE.

It belongs to the aTrm56 family. As to quaternary structure, homodimer.

Its subcellular location is the cytoplasm. The catalysed reaction is cytidine(56) in tRNA + S-adenosyl-L-methionine = 2'-O-methylcytidine(56) in tRNA + S-adenosyl-L-homocysteine + H(+). Functionally, specifically catalyzes the AdoMet-dependent 2'-O-ribose methylation of cytidine at position 56 in tRNAs. This chain is tRNA (cytidine(56)-2'-O)-methyltransferase, found in Methanocella arvoryzae (strain DSM 22066 / NBRC 105507 / MRE50).